Consider the following 405-residue polypeptide: Protein NCA1 (405 aa).

Positions 1-85 (MTTTSVCPFS…GNLNKDSTDS (85 aa)) are disordered. 2 stretches are compositionally biased toward basic and acidic residues: residues 13-24 (ARPDDGSTRKQG) and 37-48 (ARPDDASARKQG). Over residues 76-85 (GNLNKDSTDS) the composition is skewed to polar residues. An RING-type zinc finger spans residues 108-142 (CMLCQALLYESSRCVPCTHVFCKVCLTRFKDCPLC). TPR repeat units follow at residues 247–280 (GAVL…LMKL) and 292–325 (SVSL…RRDA).

As to quaternary structure, interacts with the catalases CAT1, CAT2 and CAT3. This interaction is not induced by alkaline stress or H(2)O(2) and NaCl treatments. Expressed in roots, stems, leaves, flowers and siliques.

It localises to the cytoplasm. The protein localises to the nucleus. In terms of biological role, has holdase chaperone activity that may fold catalase to a functional structure. Not required for the peroxisome import of catalases. Required for the activity of catalases and acts mainly at the post-transcriptional level. The sequence is that of Protein NCA1 from Arabidopsis thaliana (Mouse-ear cress).